The chain runs to 345 residues: Beta-2-glycoprotein 1 (345 aa).

The signal sequence occupies residues 1 to 19 (MISPVLILFSSFLCHVAIA). 4 Sushi domains span residues 21 to 81 (RTCP…KCTP), 82 to 139 (RVCP…VCAP), 140 to 202 (IICP…ECRE), and 203 to 262 (VKCP…SCKA). Intrachain disulfides connect Cys-23–Cys-66, Cys-51–Cys-79, Cys-84–Cys-124, Cys-110–Cys-137, Cys-142–Cys-188, Cys-174–Cys-200, Cys-205–Cys-248, Cys-234–Cys-260, Cys-264–Cys-315, Cys-300–Cys-325, and Cys-307–Cys-345. O-linked (GalNAc...) threonine glycosylation occurs at Thr-33. The O-linked (GalNAc...) threonine glycan is linked to Thr-149. Residue Asn-162 is glycosylated (N-linked (GlcNAc...) (complex) asparagine). N-linked (GlcNAc...) asparagine glycosylation is found at Asn-183 and Asn-193. Residue Asn-253 is glycosylated (N-linked (GlcNAc...) asparagine). The segment at 263–345 (SCKVPVKKAT…KTDASDVKPC (83 aa)) is sushi-like.

In terms of processing, N- and O-glycosylated. PubMed:6587378 also reports glycosylation on 'Asn-188' for their allele. As to expression, expressed by the liver and secreted in plasma.

The protein resides in the secreted. Binds to various kinds of negatively charged substances such as heparin, phospholipids, and dextran sulfate. May prevent activation of the intrinsic blood coagulation cascade by binding to phospholipids on the surface of damaged cells. The protein is Beta-2-glycoprotein 1 (APOH) of Homo sapiens (Human).